A 116-amino-acid chain; its full sequence is MRHQCRVPKLGRPTDQRKAMLRGLTTQLIREGRVTTTKARAKALRDEAERMITLAKNGSLASRRRAIGYIYDKQLVHALFDKAQDRYGDRQGGYTRIIRTVPRRGDNAEMAIIELV.

This sequence belongs to the bacterial ribosomal protein bL17 family. In terms of assembly, part of the 50S ribosomal subunit. Contacts protein L32.

This is Large ribosomal subunit protein bL17 from Prochlorococcus marinus (strain MIT 9303).